A 344-amino-acid chain; its full sequence is Intraflagellar transport protein 46 (344 aa).

Residues 1 to 16 show a composition bias toward acidic residues; the sequence is MDDSMDYPDRDGDDLD. The interval 1–100 is disordered; the sequence is MDDSMDYPDR…IANSDEAPPG (100 aa). Over residues 18-30 the composition is skewed to polar residues; the sequence is FQGTARSQVVQNQ.

This sequence belongs to the IFT46 family. As to quaternary structure, component of the IFT complex B, the core composed of IFT25, IFT27, IFT46, IFT52, IFT74, IFT81 and IFT88 as well as associated subunits IFT20, IFT57, IFT80 and IFT172. Interacts with IFT25, IFT52, IFT70, IFT88 and DAW1.

It localises to the cytoplasm. Its subcellular location is the cytoskeleton. The protein resides in the cilium basal body. The protein localises to the cell projection. It is found in the cilium. Forms part of a complex involved in intraflagellar transport (IFT), the bi-directional movement of particles required for the assembly, maintenance and functioning of primary cilia. Plays a role in maintaining IFT complex B stability. This is Intraflagellar transport protein 46 from Chlamydomonas reinhardtii (Chlamydomonas smithii).